The sequence spans 256 residues: Imidazole glycerol phosphate synthase subunit HisF (256 aa).

Catalysis depends on residues D13 and D132.

The protein belongs to the HisA/HisF family. In terms of assembly, heterodimer of HisH and HisF.

Its subcellular location is the cytoplasm. The enzyme catalyses 5-[(5-phospho-1-deoxy-D-ribulos-1-ylimino)methylamino]-1-(5-phospho-beta-D-ribosyl)imidazole-4-carboxamide + L-glutamine = D-erythro-1-(imidazol-4-yl)glycerol 3-phosphate + 5-amino-1-(5-phospho-beta-D-ribosyl)imidazole-4-carboxamide + L-glutamate + H(+). It participates in amino-acid biosynthesis; L-histidine biosynthesis; L-histidine from 5-phospho-alpha-D-ribose 1-diphosphate: step 5/9. In terms of biological role, IGPS catalyzes the conversion of PRFAR and glutamine to IGP, AICAR and glutamate. The HisF subunit catalyzes the cyclization activity that produces IGP and AICAR from PRFAR using the ammonia provided by the HisH subunit. This is Imidazole glycerol phosphate synthase subunit HisF from Leptospira interrogans serogroup Icterohaemorrhagiae serovar copenhageni (strain Fiocruz L1-130).